The primary structure comprises 192 residues: ATP synthase subunit b 2 (192 aa).

A helical membrane pass occupies residues 39 to 59 (SGFLAQLIWLALAFGLLYYLM).

The protein belongs to the ATPase B chain family. As to quaternary structure, F-type ATPases have 2 components, F(1) - the catalytic core - and F(0) - the membrane proton channel. F(1) has five subunits: alpha(3), beta(3), gamma(1), delta(1), epsilon(1). F(0) has three main subunits: a(1), b(2) and c(10-14). The alpha and beta chains form an alternating ring which encloses part of the gamma chain. F(1) is attached to F(0) by a central stalk formed by the gamma and epsilon chains, while a peripheral stalk is formed by the delta and b chains.

It localises to the cell inner membrane. Its function is as follows. F(1)F(0) ATP synthase produces ATP from ADP in the presence of a proton or sodium gradient. F-type ATPases consist of two structural domains, F(1) containing the extramembraneous catalytic core and F(0) containing the membrane proton channel, linked together by a central stalk and a peripheral stalk. During catalysis, ATP synthesis in the catalytic domain of F(1) is coupled via a rotary mechanism of the central stalk subunits to proton translocation. Functionally, component of the F(0) channel, it forms part of the peripheral stalk, linking F(1) to F(0). The b'-subunit is a diverged and duplicated form of b found in plants and photosynthetic bacteria. The sequence is that of ATP synthase subunit b 2 (atpF2) from Methylobacterium radiotolerans (strain ATCC 27329 / DSM 1819 / JCM 2831 / NBRC 15690 / NCIMB 10815 / 0-1).